Consider the following 169-residue polypeptide: Crossover junction endodeoxyribonuclease RuvC (169 aa).

Catalysis depends on residues D11, E71, and H143. Mg(2+) contacts are provided by D11, E71, and H143.

It belongs to the RuvC family. As to quaternary structure, homodimer which binds Holliday junction (HJ) DNA. The HJ becomes 2-fold symmetrical on binding to RuvC with unstacked arms; it has a different conformation from HJ DNA in complex with RuvA. In the full resolvosome a probable DNA-RuvA(4)-RuvB(12)-RuvC(2) complex forms which resolves the HJ. Mg(2+) is required as a cofactor.

The protein resides in the cytoplasm. The catalysed reaction is Endonucleolytic cleavage at a junction such as a reciprocal single-stranded crossover between two homologous DNA duplexes (Holliday junction).. The RuvA-RuvB-RuvC complex processes Holliday junction (HJ) DNA during genetic recombination and DNA repair. Endonuclease that resolves HJ intermediates. Cleaves cruciform DNA by making single-stranded nicks across the HJ at symmetrical positions within the homologous arms, yielding a 5'-phosphate and a 3'-hydroxyl group; requires a central core of homology in the junction. The consensus cleavage sequence is 5'-(A/T)TT(C/G)-3'. Cleavage occurs on the 3'-side of the TT dinucleotide at the point of strand exchange. HJ branch migration catalyzed by RuvA-RuvB allows RuvC to scan DNA until it finds its consensus sequence, where it cleaves and resolves the cruciform DNA. In Mesorhizobium japonicum (strain LMG 29417 / CECT 9101 / MAFF 303099) (Mesorhizobium loti (strain MAFF 303099)), this protein is Crossover junction endodeoxyribonuclease RuvC.